The chain runs to 53 residues: U1-poneritoxin-Dq5a (53 aa).

The signal sequence occupies residues 1 to 23 (MNIRLMFTLIALLVLTVSFSGAN). 3 disulfide bridges follow: Cys-25–Cys-42, Cys-32–Cys-47, and Cys-41–Cys-52.

In terms of tissue distribution, expressed by the venom gland.

The protein localises to the secreted. Its function is as follows. May have neurotoxic activity. The protein is U1-poneritoxin-Dq5a of Dinoponera quadriceps (South American ant).